We begin with the raw amino-acid sequence, 180 residues long: Ribosome maturation factor RimM (180 aa).

The region spanning 104–177 (EGEFHLLDLV…WLLLTPPPGL (74 aa)) is the PRC barrel domain.

It belongs to the RimM family. Binds ribosomal protein uS19.

The protein localises to the cytoplasm. In terms of biological role, an accessory protein needed during the final step in the assembly of 30S ribosomal subunit, possibly for assembly of the head region. Essential for efficient processing of 16S rRNA. May be needed both before and after RbfA during the maturation of 16S rRNA. It has affinity for free ribosomal 30S subunits but not for 70S ribosomes. This is Ribosome maturation factor RimM from Synechococcus sp. (strain CC9902).